We begin with the raw amino-acid sequence, 184 residues long: PXMP2/4 family protein 3 (184 aa).

A signal peptide spans 1-44 (MSNSKPLSLTDAVTTWYMKKLKSKPIQTKALTSATLSFISSVVA). Helical transmembrane passes span 58-78 (VVKF…WHII), 97-117 (IVDQ…VLAI), and 159-179 (LRVL…SILA).

It belongs to the peroxisomal membrane protein PXMP2/4 family.

The protein localises to the membrane. The protein is PXMP2/4 family protein 3 of Dictyostelium discoideum (Social amoeba).